The following is a 185-amino-acid chain: Large ribosomal subunit protein bL25 (185 aa).

Belongs to the bacterial ribosomal protein bL25 family. CTC subfamily. Part of the 50S ribosomal subunit; part of the 5S rRNA/L5/L18/L25 subcomplex. Contacts the 5S rRNA. Binds to the 5S rRNA independently of L5 and L18.

Functionally, this is one of the proteins that binds to the 5S RNA in the ribosome where it forms part of the central protuberance. This is Large ribosomal subunit protein bL25 from Chlamydia trachomatis serovar L2 (strain ATCC VR-902B / DSM 19102 / 434/Bu).